Here is a 109-residue protein sequence, read N- to C-terminus: Period circadian protein (109 aa).

Composition is skewed to polar residues over residues 42–56 (QSYS…NLSP) and 68–80 (SSRN…NLNM). The segment at 42–109 (QSYSTPANTG…LVTLTESLLK (68 aa)) is disordered. Over residues 81 to 97 (GSVTNTSNTGTGTSSGS) the composition is skewed to low complexity.

As to quaternary structure, forms a heterodimer with timeless (TIM); the complex then translocates into the nucleus. Phosphorylated with a circadian rhythmicity, probably by the double-time protein (dbt). Phosphorylation could be implicated in the stability of per monomer and in the formation of heterodimer per-tim.

The protein localises to the nucleus. It is found in the cytoplasm. The protein resides in the perinuclear region. In terms of biological role, essential for biological clock functions. Determines the period length of circadian and ultradian rhythms; an increase in PER dosage leads to shortened circadian rhythms and a decrease leads to lengthened circadian rhythms. Essential for the circadian rhythmicity of locomotor activity, eclosion behavior, and for the rhythmic component of the male courtship song that originates in the thoracic nervous system. The biological cycle depends on the rhythmic formation and nuclear localization of the TIM-PER complex. Light induces the degradation of TIM, which promotes elimination of PER. Nuclear activity of the heterodimer coordinatively regulates PER and TIM transcription through a negative feedback loop. Behaves as a negative element in circadian transcriptional loop. Does not appear to bind DNA, suggesting indirect transcriptional inhibition. The protein is Period circadian protein (per) of Musca domestica (House fly).